The primary structure comprises 85 residues: Large ribosomal subunit protein bL27 (85 aa).

It belongs to the bacterial ribosomal protein bL27 family.

The protein is Large ribosomal subunit protein bL27 of Campylobacter fetus subsp. fetus (strain 82-40).